A 428-amino-acid polypeptide reads, in one-letter code: CRISPR system endoribonuclease Csm6 (428 aa).

The segment at 1 to 145 (MKILISAVGT…RANREYTALT (145 aa)) is CARF domain. The tract at residues 146–428 (ESEIDALIME…QNKELIKMLE (283 aa)) is HEPN domain.

The protein belongs to the CRISPR-associated Csm6 family. In terms of assembly, homodimer. The composite ssRNase active site is formed at the dimer interface.

Its activity is regulated as follows. Non-specific ssRNase activity is allosterically activated about 1000-fold by cyclic hexaadenylate (cA6), a second messenger produced by Cas10 of the ternary Csm effector complex in the presence of a cognate target RNA. ssRNase activity is inhibited by physiological concentrations of ATP (1 mM), activity is restored by cOA. In terms of biological role, CRISPR (clustered regularly interspaced short palindromic repeat) is an adaptive immune system that provides protection against mobile genetic elements (viruses, transposable elements and conjugative plasmids). CRISPR clusters contain spacers, sequences complementary to antecedent mobile elements, and target invading nucleic acids. CRISPR clusters are transcribed and processed into CRISPR RNA (crRNA). The type III-A Csm complex binds crRNA and acts as a crRNA-guided RNase, DNase and cyclic oligoadenylate synthase; binding of target RNA cognate to the crRNA is required for all activities. In a heterologous host this Csm effector complex restricts ssRNA phage MS2, suggesting it may target RNA viruses in vivo. This protein is not part of the Csm complex. Functionally, csm functions as a non-specific ssDNase. Base-pairing between crRNA and target RNA to form a ternary Csm complex activates a ssDNase activity; target RNA cleavage suppresses the ssDNase, a temporal control that prevents uncontrolled DNA degradation. Viral RNA transcripts probably tether the Csm complex to the viral genome, recruiting Cas10 ssDNA activity which is able to degrade DNA in the transcription bubble, spatially controlling the DNase activity. Its function is as follows. A single-strand-specific endoribonuclease (ssRNase) that is approximately 1000-fold stimulated by cyclic oligoadenylate (cOA); although several species of cOA are synthesized by this organism only cyclic hexaadenylate (cA6) stimulates the ssRNase activity. Cleaves preferentially within GA or AA dinucleotides, although the presence of cA6 broadens the preference. Linear oligoadenylates do not activate the RNase. The polypeptide is CRISPR system endoribonuclease Csm6 (Streptococcus thermophilus).